We begin with the raw amino-acid sequence, 539 residues long: Eukaryotic translation initiation factor 3 subunit L (539 aa).

The PCI domain occupies 302–514; the sequence is TFSSILLYIQ…IHIADTKVSH (213 aa).

It belongs to the eIF-3 subunit L family. Component of the eukaryotic translation initiation factor 3 (eIF-3) complex.

It is found in the cytoplasm. Its function is as follows. Component of the eukaryotic translation initiation factor 3 (eIF-3) complex, which is involved in protein synthesis of a specialized repertoire of mRNAs and, together with other initiation factors, stimulates binding of mRNA and methionyl-tRNAi to the 40S ribosome. The eIF-3 complex specifically targets and initiates translation of a subset of mRNAs involved in cell proliferation. This Anopheles gambiae (African malaria mosquito) protein is Eukaryotic translation initiation factor 3 subunit L.